The chain runs to 173 residues: Myosin light chain 5 (173 aa).

Residues 1 to 22 (MASRKTKKKEGGGLRAQRASSN) are disordered. EF-hand domains are found at residues 30 to 65 (TQIQ…LGKT), 100 to 135 (DAEE…QADK), and 136 to 171 (MTAE…GEEK). The Ca(2+) site is built by Asp43, Asn45, Asp47, and Asp54.

Myosin is a hexamer of 2 heavy chains and 4 light chains. As to expression, jaw-closing muscles.

The chain is Myosin light chain 5 (MYL5) from Felis catus (Cat).